A 214-amino-acid chain; its full sequence is Putative pit accessory protein (214 aa).

Belongs to the UPF0111 family.

In terms of biological role, could be involved in orthophosphate transport. This Rhizobium meliloti (strain 1021) (Ensifer meliloti) protein is Putative pit accessory protein.